The primary structure comprises 401 residues: Nicotinate phosphoribosyltransferase (401 aa).

His224 carries the phosphohistidine; by autocatalysis modification.

It belongs to the NAPRTase family. In terms of processing, transiently phosphorylated on a His residue during the reaction cycle. Phosphorylation strongly increases the affinity for substrates and increases the rate of nicotinate D-ribonucleotide production. Dephosphorylation regenerates the low-affinity form of the enzyme, leading to product release.

The enzyme catalyses nicotinate + 5-phospho-alpha-D-ribose 1-diphosphate + ATP + H2O = nicotinate beta-D-ribonucleotide + ADP + phosphate + diphosphate. Its pathway is cofactor biosynthesis; NAD(+) biosynthesis; nicotinate D-ribonucleotide from nicotinate: step 1/1. Its function is as follows. Catalyzes the synthesis of beta-nicotinate D-ribonucleotide from nicotinate and 5-phospho-D-ribose 1-phosphate at the expense of ATP. The sequence is that of Nicotinate phosphoribosyltransferase from Pseudomonas putida (strain GB-1).